The following is a 180-amino-acid chain: Adenine phosphoribosyltransferase (180 aa).

This sequence belongs to the purine/pyrimidine phosphoribosyltransferase family. In terms of assembly, homodimer.

It localises to the cytoplasm. The catalysed reaction is AMP + diphosphate = 5-phospho-alpha-D-ribose 1-diphosphate + adenine. The protein operates within purine metabolism; AMP biosynthesis via salvage pathway; AMP from adenine: step 1/1. In terms of biological role, catalyzes a salvage reaction resulting in the formation of AMP, that is energically less costly than de novo synthesis. The protein is Adenine phosphoribosyltransferase of Marinobacter nauticus (strain ATCC 700491 / DSM 11845 / VT8) (Marinobacter aquaeolei).